Reading from the N-terminus, the 284-residue chain is 4-diphosphocytidyl-2-C-methyl-D-erythritol kinase (284 aa).

Lysine 14 is an active-site residue. Position 98–108 (98–108) interacts with ATP; the sequence is PMGGGLGGGSS. The active site involves aspartate 140.

This sequence belongs to the GHMP kinase family. IspE subfamily.

It carries out the reaction 4-CDP-2-C-methyl-D-erythritol + ATP = 4-CDP-2-C-methyl-D-erythritol 2-phosphate + ADP + H(+). It functions in the pathway isoprenoid biosynthesis; isopentenyl diphosphate biosynthesis via DXP pathway; isopentenyl diphosphate from 1-deoxy-D-xylulose 5-phosphate: step 3/6. In terms of biological role, catalyzes the phosphorylation of the position 2 hydroxy group of 4-diphosphocytidyl-2C-methyl-D-erythritol. The protein is 4-diphosphocytidyl-2-C-methyl-D-erythritol kinase of Shewanella sp. (strain W3-18-1).